The sequence spans 602 residues: Aspartate--tRNA(Asp/Asn) ligase (602 aa).

Glu170 lines the L-aspartate pocket. Residues 194–197 are aspartate; that stretch reads QLFK. Residue Arg216 participates in L-aspartate binding. Residues 216 to 218 and Gln225 contribute to the ATP site; that span reads RDE. Position 448 (His448) interacts with L-aspartate. Glu482 contributes to the ATP binding site. An L-aspartate-binding site is contributed by Arg489. 534 to 537 provides a ligand contact to ATP; it reads GWDR. The disordered stretch occupies residues 559–602; the sequence is GGVDPLTSAPAPITAQQRKESGVDAKPEPKGDAAAAKPQVSAEK. Basic and acidic residues predominate over residues 575 to 589; it reads QRKESGVDAKPEPKG.

The protein belongs to the class-II aminoacyl-tRNA synthetase family. Type 1 subfamily. In terms of assembly, homodimer.

It localises to the cytoplasm. It catalyses the reaction tRNA(Asx) + L-aspartate + ATP = L-aspartyl-tRNA(Asx) + AMP + diphosphate. Functionally, aspartyl-tRNA synthetase with relaxed tRNA specificity since it is able to aspartylate not only its cognate tRNA(Asp) but also tRNA(Asn). Reaction proceeds in two steps: L-aspartate is first activated by ATP to form Asp-AMP and then transferred to the acceptor end of tRNA(Asp/Asn). In Rhodococcus opacus (strain B4), this protein is Aspartate--tRNA(Asp/Asn) ligase.